Reading from the N-terminus, the 156-residue chain is Small ribosomal subunit protein uS7 (156 aa).

It belongs to the universal ribosomal protein uS7 family. Part of the 30S ribosomal subunit. Contacts proteins S9 and S11.

One of the primary rRNA binding proteins, it binds directly to 16S rRNA where it nucleates assembly of the head domain of the 30S subunit. Is located at the subunit interface close to the decoding center, probably blocks exit of the E-site tRNA. This Kocuria rhizophila (strain ATCC 9341 / DSM 348 / NBRC 103217 / DC2201) protein is Small ribosomal subunit protein uS7.